The following is a 329-amino-acid chain: Aurora kinase B (329 aa).

Over residues 1 to 14 (MTLSRAKHANRNHL) the composition is skewed to basic residues. Residues 1-21 (MTLSRAKHANRNHLPHLLAKV) are disordered. Residues 53 to 305 (FEMGAHLGRG…LVDVMTHYWV (253 aa)) enclose the Protein kinase domain. ATP contacts are provided by residues 59–67 (LGRGKFGRV) and lysine 82. Aspartate 178 (proton acceptor) is an active-site residue.

It belongs to the protein kinase superfamily. Ser/Thr protein kinase family. Aurora subfamily. In terms of assembly, interacts with Incenp and Cdc37. Mg(2+) is required as a cofactor.

The protein localises to the chromosome. It localises to the cytoplasm. The protein resides in the cytoskeleton. It is found in the midbody. The catalysed reaction is L-seryl-[protein] + ATP = O-phospho-L-seryl-[protein] + ADP + H(+). It catalyses the reaction L-threonyl-[protein] + ATP = O-phospho-L-threonyl-[protein] + ADP + H(+). In terms of biological role, serine/threonine-protein kinase that mediates both meiotic and mitotic chromosome segregation. Required for histone H3 'Ser-10' phosphorylation. Phosphorylates mei-S332 within residues 124-126 and stabilizes its association with centromeres during meiosis. May regulate the function of the ESCRT-III complex core component shrb during abscission of germline cells in oogenesis. This chain is Aurora kinase B, found in Drosophila melanogaster (Fruit fly).